The chain runs to 173 residues: 16S rRNA aminocarboxypropyltransferase (173 aa).

S-adenosyl-L-methionine-binding residues include threonine 25, leucine 72, leucine 96, and serine 115.

The protein belongs to the TDD superfamily. TSR3 family.

The protein localises to the cytoplasm. It carries out the reaction an N(1)-methylpseudouridine in rRNA + S-adenosyl-L-methionine = N(1)-methyl-N(3)-[(3S)-3-amino-3-carboxypropyl]pseudouridine in rRNA + S-methyl-5'-thioadenosine + H(+). Its function is as follows. Aminocarboxypropyltransferase that catalyzes the aminocarboxypropyl transfer on pseudouridine corresponding to position 914 in M.jannaschii 16S rRNA. It constitutes the last step in biosynthesis of the hypermodified N1-methyl-N3-(3-amino-3-carboxypropyl) pseudouridine (m1acp3-Psi). This Methanococcoides burtonii (strain DSM 6242 / NBRC 107633 / OCM 468 / ACE-M) protein is 16S rRNA aminocarboxypropyltransferase.